The following is a 238-amino-acid chain: Large ribosomal subunit protein uL2 (238 aa).

The interval 201–238 (PFGGGGRQHPGRPKTVSRNTPPGRKVGSIAARRTGVGH) is disordered.

The protein belongs to the universal ribosomal protein uL2 family. As to quaternary structure, part of the 50S ribosomal subunit. Forms a bridge to the 30S subunit in the 70S ribosome.

In terms of biological role, one of the primary rRNA binding proteins. Required for association of the 30S and 50S subunits to form the 70S ribosome, for tRNA binding and peptide bond formation. It has been suggested to have peptidyltransferase activity; this is somewhat controversial. Makes several contacts with the 16S rRNA in the 70S ribosome. The chain is Large ribosomal subunit protein uL2 from Methanocella arvoryzae (strain DSM 22066 / NBRC 105507 / MRE50).